Reading from the N-terminus, the 519-residue chain is MKLTVWTYEGPPHVGAMRVATAMKGLHYVLHAPQGDTYADLLFTMIERRDHRPPVTYTTFEGRDLGEDTAGIFKVTCQEAYDRFKPQAIIVGASCTAELIQDDPGGLAETMQIPVPVIPLELPSYQRKENFGSDETFYQIVKSLARPMDRTPEVTVNIIGPLALGFRHRDDIEEVKGLLYEMGIGVNVVAPFDATPEDITRLGAAHANVLMYPEHAESAARHLERICGQPYTKTIPIGVAATHEFVAEVAQLCGVEPRKDLSRLRQPWWSKSVDSTYLTGKRVFLFGDATHVKAAARIARDEMGFEVVGLGCYNREFARSIRELAREFDVPALITDDYLEVEKAIEDASPEMILGTQMERHIGKRLGIPCAVISAPVHVQDFPARYSPQMGWEGANVIFDTWIHPLVMGLEEHLLSMFREDFEFHDEAGPSHHGGHSPKPSEAARTPDKVEERADPAPEAPQTGSDVMVWLSEAEKELKKIPFFVRGKARRNTEKFAADQGLQEISLDTLYEAKAHYAR.

D36 contributes to the [4Fe-4S] cluster binding site. The Proton donor role is filled by D274. Residue 409-410 coordinates substrate; it reads GL. The disordered stretch occupies residues 426-465; the sequence is DEAGPSHHGGHSPKPSEAARTPDKVEERADPAPEAPQTGS. Residues 445 to 456 are compositionally biased toward basic and acidic residues; that stretch reads RTPDKVEERADP.

It belongs to the ChlB/BchB/BchZ family. As to quaternary structure, protochlorophyllide reductase is composed of three subunits; BchL, BchN and BchB. Forms a heterotetramer of two BchB and two BchN subunits. [4Fe-4S] cluster serves as cofactor.

It carries out the reaction chlorophyllide a + oxidized 2[4Fe-4S]-[ferredoxin] + 2 ADP + 2 phosphate = protochlorophyllide a + reduced 2[4Fe-4S]-[ferredoxin] + 2 ATP + 2 H2O. It functions in the pathway porphyrin-containing compound metabolism; bacteriochlorophyll biosynthesis (light-independent). Functionally, component of the dark-operative protochlorophyllide reductase (DPOR) that uses Mg-ATP and reduced ferredoxin to reduce ring D of protochlorophyllide (Pchlide) to form chlorophyllide a (Chlide). This reaction is light-independent. The NB-protein (BchN-BchB) is the catalytic component of the complex. The polypeptide is Light-independent protochlorophyllide reductase subunit B (Jannaschia sp. (strain CCS1)).